The sequence spans 112 residues: Large ribosomal subunit protein P1 (112 aa).

Over residues 71–90 (PAQAAAAAPAGGAPAAAAPA) the composition is skewed to low complexity. Residues 71–112 (PAQAAAAAPAGGAPAAAAPAESKEGRRSQGESDDDMGFGLLD) are disordered. The segment covering 91 to 100 (ESKEGRRSQG) has biased composition (basic and acidic residues).

Belongs to the eukaryotic ribosomal protein P1/P2 family. In terms of assembly, P1 and P2 exist as dimers at the large ribosomal subunit.

Plays an important role in the elongation step of protein synthesis. The protein is Large ribosomal subunit protein P1 (rpl-21) of Oscheius tipulae.